We begin with the raw amino-acid sequence, 1971 residues long: Germinal-center associated nuclear protein (1971 aa).

2 disordered regions span residues 1-50 and 214-406; these read MHPV…KSLA and PAFA…RGKS. A compositionally biased stretch (polar residues) spans 8–29; sequence GGQQPSAFAVSSSTTGTYQTKS. Position 32 is an asymmetric dimethylarginine (Arg32). Residues 33–335 form an FG-repeats region; sequence FGQPSLFGQN…RPRGGTLFGR (303 aa). Composition is skewed to polar residues over residues 38–50 and 214–224; these read LFGQNSTPSKSLA and PAFASPLSNQN. The span at 232–253 shows a compositional bias: low complexity; that stretch reads STSAFGSSNSSFSTFPTASPGS. 2 stretches are compositionally biased toward basic and acidic residues: residues 288–321 and 342–359; these read RKEDQDRSPRRHCHEAAEDPDPLSRGDHPPDKRP and KSNKEAGRLGSKESKESG. Residues 414–550 are DNA primase; sequence EEWIYSLGGV…AAGSLLSKSS (137 aa). Ser424 is modified (phosphoserine). N6-acetyllysine occurs at positions 483 and 484. Ser502, Ser531, and Ser550 each carry phosphoserine. Positions 768–951 constitute a PCI domain; it reads NNENMTKCLQ…RKSVFIGRKL (184 aa). Residues 1124 to 1162 adopt a coiled-coil conformation; sequence HVAAEEVSMERQRLEEEKQRAEEERLKQERELMLTQLSE. Residues 1793-1840 form a disordered region; that stretch reads RELQLSHGRSGMRSIHPPTSTFPTPLLHVHQKGKKKEESGREGSLSTE.

It belongs to the SAC3 family. Component of the nuclear pore complex (NPC)-associated TREX-2 complex (transcription and export complex 2), composed of at least GANP, 2 copies of ENY2, PCID2, SEM1/DSS1, and either centrin CETN2 or centrin CETN3. The TREX-2 complex also associates with ALYREF/ALY. Interacts with RNA polymerase II subunit POLR2A and with the transcription elongation factor SUPT5H/SPT5. Interacts (via FG-repeats) with NXF1; this interaction is not mediated by RNA. Interacts with nuclear envelope proteins NUP62, NUP153 and RANBP2/NUP358; interaction with NUP153 is required for full localization at the nuclear pore complex. Interacts with several RNA helicases, including DHX9, DDX21, and DDX39A/DDX39, and with DNA topoisomerase TOP2A. Directly interacts with AICDA/AID. Interacts with the glucocorticoid receptor NR3C1. Interacts with MCM3. In terms of processing, phosphorylation at Ser-502 is induced in B-cells by CD40-stimulation, but not by bacterial lipopolysaccharide (LPS). In terms of tissue distribution, expressed at low levels in lymphoid organs, including thymus, spleen and lymph nodes. Up-regulated in stimulated B-cells in spleen and Peyer's patch germinal centers (at protein level).

The protein resides in the cytoplasm. The protein localises to the nucleus. Its subcellular location is the nucleus envelope. It localises to the nuclear pore complex. It is found in the nucleoplasm. The protein resides in the chromosome. It catalyses the reaction L-lysyl-[histone] + acetyl-CoA = N(6)-acetyl-L-lysyl-[histone] + CoA + H(+). As a component of the TREX-2 complex, involved in the export of mRNAs to the cytoplasm through the nuclear pores. Through the acetylation of histones, affects the assembly of nucleosomes at immunoglobulin variable region genes and promotes the recruitment and positioning of transcription complex to favor DNA cytosine deaminase AICDA/AID targeting, hence promoting somatic hypermutations. This chain is Germinal-center associated nuclear protein (Mcm3ap), found in Mus musculus (Mouse).